We begin with the raw amino-acid sequence, 555 residues long: Membrane protein insertase YidC (555 aa).

A helical membrane pass occupies residues 7 to 24 (ILWVIFSMSLVLLYDNWQ). Low complexity-rich tracts occupy residues 40-54 (QQAAPAGAGGATPQA) and 64-81 (AAPGTVPAAPQAAAQPVG). The tract at residues 40–81 (QQAAPAGAGGATPQADVPKANATNAAPGTVPAAPQAAAQPVG) is disordered. A run of 5 helical transmembrane segments spans residues 334 to 354 (LELVKDYGWLTILAKPLFWLL), 360 to 380 (FLGNWGWSIIGLTVLIKLVFF), 430 to 450 (LGGCLPIVIQIPVFIALYWVL), 468 to 488 (LSVPDPFYILPIVMAVSMFVQ), and 503 to 523 (VMMIMPLVFSFMFFFFPAGLV).

It belongs to the OXA1/ALB3/YidC family. Type 1 subfamily. As to quaternary structure, interacts with the Sec translocase complex via SecD. Specifically interacts with transmembrane segments of nascent integral membrane proteins during membrane integration.

Its subcellular location is the cell inner membrane. Required for the insertion and/or proper folding and/or complex formation of integral membrane proteins into the membrane. Involved in integration of membrane proteins that insert both dependently and independently of the Sec translocase complex, as well as at least some lipoproteins. Aids folding of multispanning membrane proteins. This is Membrane protein insertase YidC from Cupriavidus metallidurans (strain ATCC 43123 / DSM 2839 / NBRC 102507 / CH34) (Ralstonia metallidurans).